Consider the following 350-residue polypeptide: Chorismate synthase (350 aa).

The NADP(+) site is built by Arg-39 and Arg-45. Residues 119–121 (RSS), 213–214 (QA), Gly-258, 273–277 (KPIPT), and Arg-299 each bind FMN.

Belongs to the chorismate synthase family. In terms of assembly, homotetramer. The cofactor is FMNH2.

The catalysed reaction is 5-O-(1-carboxyvinyl)-3-phosphoshikimate = chorismate + phosphate. The protein operates within metabolic intermediate biosynthesis; chorismate biosynthesis; chorismate from D-erythrose 4-phosphate and phosphoenolpyruvate: step 7/7. Catalyzes the anti-1,4-elimination of the C-3 phosphate and the C-6 proR hydrogen from 5-enolpyruvylshikimate-3-phosphate (EPSP) to yield chorismate, which is the branch point compound that serves as the starting substrate for the three terminal pathways of aromatic amino acid biosynthesis. This reaction introduces a second double bond into the aromatic ring system. The sequence is that of Chorismate synthase from Thermoanaerobacter pseudethanolicus (strain ATCC 33223 / 39E) (Clostridium thermohydrosulfuricum).